A 541-amino-acid chain; its full sequence is MRLSARGFVWSALLACTASALSEAAATASNSSQTLRTCVSQALVAGDVNTRIIDPSNDTYTDARLGEKIQFNEFPALIAYAKKAEEVASLVRCAQRSGFKAVPRSGGHHFEAWSALNGTLVIDLSHINHVNVSADTTTANVGAGIRQGALYLALDEHNVTFPGGICPTVALGGLVSSGGFSLQMRALGLAAEYVQSARVVLADGSLVTASSSSHEDLFWAIRGGGGGTYGIIVDFDLQLMQFPTSAMVAISWNASSDRYPVAQRFFDWAPVQIPAFTSQVNVYKSSINFLGQYLGGTENELRKLINESGLLNIGTPTVYISGNCDTDNSRLFGYTSYECVPANETNRQIMNVLPEPFSQYSDYPQYQYENEPEDPSIPIAEPWARFNRISKSFFMQKDNILPAADLKTVIDMMGQLDTDSEIWGEWHAWNISSATKADYAFPWREQAYAHLEFQVHGSLTNSTKQATYEKWFADLETYLRPKIGVASYSGEMDAHISTNPFESYYGDSVCRLVEVKKAYDPDNFFTNPDAITPTVPEGISC.

Positions 1–20 are cleaved as a signal peptide; it reads MRLSARGFVWSALLACTASA. Residues asparagine 30, asparagine 57, asparagine 117, asparagine 131, asparagine 158, asparagine 253, asparagine 306, asparagine 343, asparagine 430, and asparagine 461 are each glycosylated (N-linked (GlcNAc...) asparagine). The region spanning 71-242 is the FAD-binding PCMH-type domain; sequence FNEFPALIAY…VDFDLQLMQF (172 aa).

The protein belongs to the oxygen-dependent FAD-linked oxidoreductase family. FAD serves as cofactor.

It participates in secondary metabolite biosynthesis. Functionally, FAD-linked oxidoreductase; part of the gene cluster that mediates the biosynthesis of pyranonigrins, a family of antioxidative compounds. The first step of pyranonigrins biosynthesis is performed by the hybrid PKS-NRPS synthetase that condenses 6 malonyl-CoA units to an acetyl starter unit, to form a 1,3,5-trioxotetradecane-6,8-dienyl-ACP. The enoyl reductase (ER) domain of pynA is likely to be functional during the first two rounds of polyketide chain extension, to generate the saturated C-C bonds of the alkyl side chain. PynA subsequently forms the amide bond between the acyl chain and L-serine. Although pynA has a terminal reductase domain, it appears to require the thioesterase pynI for the release of the straight-chain intermediate from pynA via the formation of a tetramic acid pyranonigrin J. The methyltransferase pynC then coverts pyranonigrin J to pyranonigrin I via N-methylation. The FAD-dependent monooxygenase pynG catalyzes an epoxidation-mediated cyclization to form the dihydro-gamma-pyrone moiety, followed by pynD-catalyzed oxidation of the alcohol to the ketone and enolization to yield the characteristic tetramic acid-fused gamma-pyrone core of pyranonigrin H. Pyranonigrin H is substrate of pynH for dehydration-mediated exo-methylene formation from the serine side chain to produce pyranonigrin E, before the oxidase pynE reduces the exo-methylene of pyranonigrin E into a pendant methyl to form pyranonigrin G. The FAD-linked oxidoreductase pynB performs the reverse reaction and converts pyranonigrin G back to pyranonigrin E. This is FAD-linked oxidoreductase pynB from Aspergillus niger (strain ATCC MYA-4892 / CBS 513.88 / FGSC A1513).